Reading from the N-terminus, the 2338-residue chain is MKRIRWLTPKPATFVVLGCVWISVAQGTILSSCLTSCVTNLGRQLDSGTRYNLSEACIQGCQFWNSIDQEKCALKCNDTYVTICERESCEVGCSNAEGSYEEEVLDNTELPTAPFASSIGSNGVTLRWNPANISGVKYIIQWKYAQLPGSWAYTETVSKLSYMVEPLHPFTEYIFRVVWIFTAQLHLYSPPSPSYRTHPYGVPETAPFITNIESSSPDTVEVSWAPPYFPGGPILGYNLRLISKTQKLDSGTQRTSFQFYSTLPNTTYRFSIAAVNEVGEGPEAESMITTPSPAVQEEEQWLFLSRKTSLRKRSLKYLVDEAHCLWSDAIRHNITGISVNTQQEVVYFSEGTIIWMKGAANMSDVSDLRIFYRGSALVSSISVDWLYQRMYFIMDNRVHVCDLKHCSNLEEITPFSIVAPQKVVVDSYNGYVFYLLRDGIYRVHLPLPSVRDTKAVRIVESGTLKDFAVKPQSKRIIYFNGTMQVFMSTFLDGSAFHRVLPWVPLADVKSFACENNDFLITDGKAIFQQDSLSFNEFIVGCDLSHIEEFGFGNLVIFGSSVQSYPLPGHPQEVSVLFGSREALIQWKPPILAIGASPSAWQNWTYEVKVSSQDILETTQVFLNISRTVLNVPKLQSSTKYMVSVRASSPKGPGPWSEPSVGTTLVPATEPPFIMAVKEDGLWSKPLSSFGPGEFLSSDVGNVSDMDWYNNSLYYSDTKGNVYVRPLNGMDISENYHISSIAGACALAFEWLGHFLYWAGKTYVIQRQSVLTGHTDIVTHVKLLVNDMAVDPVGGYLYWTTLYSVESTRLNGESSLVLQAQPWLSGKKVIALTLDLSDGLLYWLVQDNQCIHLYTAVLRGWSGADATITEFAAWSTSEISQNALMYYSGRLFWINGFRIITAQEIGQRTSVSVSEPGKFNQFTIIQTSLKPLPGNFSSTPTVIPDSVQESSFRIEGHTSSFRILWNEPPAVDWGIVFYSVEFSAHSKFLAIEQQSLPVFTVEGLEPYALFNLSVTPYTYWGKGQKTSLSFRAPESVPSAPENPRIFILSLGRYTRKNEVVVEFRWNKPKHENGVLTKSEIFYHISKQSGTNKSTEDWVSVSVTPPVMSFQLEAMSPGYIVSFQVRVFTSKGPGPFSDIVMSKTSEIKPCPYLISLLGNKIEFLDMDQNQVVWTFSLEGAVSTVGYTADDEMGYFAQGDALFLLNLHNHSSSKLFQDVLASDIAVIAVDWIARHLYFALKASQDGTQIFDVDLEHKVKSPREVKICKSHTAIISFSMYPLLSRLYWTEVSDLGYQMFYCNISSHTLHHVLQPKASNQHGRRQCSCNVTESELSGAMTVDTSDPDRPWIYFTKQQEIWAMDLEGCQCWKVIMVPATPGKRIISLTVDGEFIYWITTMKDDTEIYQAKKGSGAILSQVKAPRSKHILAYSSALQPFPDKAYLSVASNMVEASILNATNTSLILKLPPVKTNLTWHGITTPTSTYLVYYMEANRANSSDRKHNMLESQENVARIEGLQPFSTYVIQIAVKNYYSDPLEHLSLGKEIQGKTKSGVPGAVCHINATVLSDTSLLVFWTESHKPNGPKELVRYQLVMSYLAPIPETPLRQDEFPSARLSLLVTKLSGGQQYVLKILACHSEEMWCTESHPVSVNMFDTPEKPSALVPENTSLLLDWKAPSNANLTRFWFELQKWKYSEFYHVKASCSQGPVYVCNIANLQPYTPYNIRVVVVYTTGENSSSIPESFKTKAGVPSKPGIPKLLEGSKNSIQWEKAEDNGNRLMYYTLEVRKSISNDSRDQSLRWTAVFNGSCSSICTWRSKNLKGTFQFRAVASNAIGFGEYSEISEDITLVEDGFWITETSFILTIIVGIFLVATVPLTFVWHRSLKNHKATKEGLSVLNDNDQELAELRGLAAGVGLANACYAVHTLPTQEEIESLPAFPREKLSLRLLLGSGAFGEVYEGTAVDILGRGSGEIKVAVKTLKKGSTDQEKIEFLKEAHLMSKFNHPNILKQLGVCLLSEPQYIILELMEGGDLLSYLRKARGTTLSGPLLTLADLVELCVDISKGCVYLEQMHFIHRDLAARNCLVSVKDYTSPRVVKIGDFGLAREIYKHDYYRKRGEGLLPVRWMAPENLMDGIFTSQSDVWSFGILVWEILTLGHQPYPAHSNLDVLNYVQAGGRLEPPRNCPDDLWNLMFRCWAQEPDQRPTFYNIQDQLQLFRNVSLNNVSHCGQAAPAGGVINKGFEGEDNEMATLNSDDTMPVALMETRNQEGLNYMVLATKCSQSEDRYEGPLGSKESGLHDLKKDERQPADKDFCQQPQVAYGSPGHSEGLNYACLAHSGHGDVSE.

The first 27 residues, 1–27, serve as a signal peptide directing secretion; it reads MKRIRWLTPKPATFVVLGCVWISVAQG. At 28–1853 the chain is on the extracellular side; sequence TILSSCLTSC…EDGFWITETS (1826 aa). N-linked (GlcNAc...) asparagine glycans are attached at residues asparagine 52 and asparagine 77. Fibronectin type-III domains lie at 110 to 205 and 206 to 294; these read LPTA…VPET and APFI…PSPA. N-linked (GlcNAc...) asparagine glycosylation is found at asparagine 333, asparagine 361, asparagine 480, asparagine 623, asparagine 934, and asparagine 1010. Positions 566–666 constitute a Fibronectin type-III 3 domain; the sequence is LPGHPQEVSV…EPSVGTTLVP (101 aa). 2 Fibronectin type-III domains span residues 942–1037 and 1038–1145; these read IPDS…SVPS and APEN…TSEI. Residue asparagine 1298 is glycosylated (N-linked (GlcNAc...) asparagine). 4 consecutive Fibronectin type-III domains span residues 1440-1548, 1549-1648, 1650-1743, and 1744-1845; these read VASN…TKSG, VPGA…VNMF, TPEK…TKAG, and VPSK…LVED. Asparagine 1675 carries N-linked (GlcNAc...) asparagine glycosylation. The chain crosses the membrane as a helical span at residues 1854–1874; the sequence is FILTIIVGIFLVATVPLTFVW. Over 1875–2338 the chain is Cytoplasmic; the sequence is HRSLKNHKAT…AHSGHGDVSE (464 aa). The 274-residue stretch at 1937 to 2210 folds into the Protein kinase domain; the sequence is LSLRLLLGSG…YNIQDQLQLF (274 aa). ATP is bound by residues 1943 to 1951 and lysine 1972; that span reads LGSGAFGEV. Aspartate 2071 functions as the Proton acceptor in the catalytic mechanism. Position 2266 is a phosphotyrosine; by autocatalysis (tyrosine 2266). The interval 2277-2314 is disordered; that stretch reads EDRYEGPLGSKESGLHDLKKDERQPADKDFCQQPQVAY. Residues 2289-2306 show a composition bias toward basic and acidic residues; sequence SGLHDLKKDERQPADKDF. At tyrosine 2325 the chain carries Phosphotyrosine; by autocatalysis.

This sequence belongs to the protein kinase superfamily. Tyr protein kinase family. Insulin receptor subfamily. As to quaternary structure, interacts with PTPN11; may activate the PI3 kinase-mTOR signaling pathway. Interacts with VAV3; constitutive interaction mediating VAV3 phosphorylation. Interacts with PTPN6 (via SH2 1 domain); the interaction is direct and promotes ROS1 dephosphorylation. Post-translationally, phosphorylated. Probably autophosphorylates. Phosphorylation at Tyr-2266 is required for the interaction with PTPN6 that mediates ROS1 dephosphorylation. Phosphorylation at Tyr-2266 stimulates the kinase activity and the activation of the ERK1 signaling cascade. Phosphorylation at Tyr-2266 and/or Tyr-2325 recruits PTPN11. In terms of tissue distribution, expressed in heart, lung, kidney and testis.

The protein resides in the cell membrane. The enzyme catalyses L-tyrosyl-[protein] + ATP = O-phospho-L-tyrosyl-[protein] + ADP + H(+). Its activity is regulated as follows. Inhibited by dephosphorylation by PTPN6. In terms of biological role, orphan receptor tyrosine kinase (RTK) that plays a role in epithelial cell differentiation and regionalization of the proximal epididymal epithelium. NELL2 is an endogenous ligand for ROS1. Upon endogenous stimulation by NELL2, ROS1 activates the intracellular signaling pathway and triggers epididymal epithelial differentiation and subsequent sperm maturation. May activate several downstream signaling pathways related to cell differentiation, proliferation, growth and survival including the PI3 kinase-mTOR signaling pathway. Mediates the phosphorylation of PTPN11, an activator of this pathway. May also phosphorylate and activate the transcription factor STAT3 to control anchorage-independent cell growth. Mediates the phosphorylation and the activation of VAV3, a guanine nucleotide exchange factor regulating cell morphology. May activate other downstream signaling proteins including AKT1, MAPK1, MAPK3, IRS1 and PLCG2. The sequence is that of Proto-oncogene tyrosine-protein kinase ROS (Ros1) from Rattus norvegicus (Rat).